The chain runs to 471 residues: Glutamine synthetase (471 aa).

One can recognise a GS beta-grasp domain in the interval 14-99 (QKIQMIDLKF…ICSIKEPRTG (86 aa)). The region spanning 106–471 (PRVIAQKAID…PYEFYLYYDC (366 aa)) is the GS catalytic domain. Mg(2+) contacts are provided by glutamate 131 and glutamate 133. Glutamate 208 lines the ATP pocket. Residues glutamate 213 and glutamate 221 each coordinate Mg(2+). Residues 265–266 (NG) and glycine 266 each bind L-glutamate. Histidine 270 is a binding site for Mg(2+). ATP is bound by residues 272–274 (HQS) and serine 274. The L-glutamate site is built by arginine 322, glutamate 328, and arginine 340. The ATP site is built by arginine 340, arginine 345, and lysine 354. Position 359 (glutamate 359) interacts with Mg(2+). Position 361 (arginine 361) interacts with L-glutamate. Tyrosine 399 bears the O-AMP-tyrosine mark.

This sequence belongs to the glutamine synthetase family. In terms of assembly, oligomer of 12 subunits arranged in the form of two hexagons. The cofactor is Mg(2+).

The protein resides in the cytoplasm. It carries out the reaction L-glutamate + NH4(+) + ATP = L-glutamine + ADP + phosphate + H(+). Its activity is regulated as follows. The activity of this enzyme could be controlled by adenylation under conditions of abundant glutamine. Involved in nitrogen metabolism via ammonium assimilation. Catalyzes the ATP-dependent biosynthesis of glutamine from glutamate and ammonia. The sequence is that of Glutamine synthetase from Microchaete diplosiphon (Fremyella diplosiphon).